A 541-amino-acid polypeptide reads, in one-letter code: Chaperonin GroEL 2 (541 aa).

ATP contacts are provided by residues 30 to 33 (TLGP), lysine 51, 87 to 91 (DGTTT), glycine 415, and aspartate 496.

It belongs to the chaperonin (HSP60) family. In terms of assembly, forms a cylinder of 14 subunits composed of two heptameric rings stacked back-to-back. Interacts with the co-chaperonin GroES.

The protein resides in the cytoplasm. It carries out the reaction ATP + H2O + a folded polypeptide = ADP + phosphate + an unfolded polypeptide.. Its function is as follows. Together with its co-chaperonin GroES, plays an essential role in assisting protein folding. The GroEL-GroES system forms a nano-cage that allows encapsulation of the non-native substrate proteins and provides a physical environment optimized to promote and accelerate protein folding. The sequence is that of Chaperonin GroEL 2 from Gluconacetobacter diazotrophicus (strain ATCC 49037 / DSM 5601 / CCUG 37298 / CIP 103539 / LMG 7603 / PAl5).